A 250-amino-acid chain; its full sequence is MILSQFDQNIQPLSSAILPRHIAIIMDGNGRWARGRGKLRIVGHQAGFQAARRAVRFAVHCRFNALTLYAFSSENWTRSNTEISSLMQLFIYALNSEINNLNKNNIKLRIIGDVNRFTQELQDCIYRSEQLTSNNNGLNLNIAANYGGRWDIVQGVKKIIAQIQKGVLKPNQINENILCKYVCMNELSPVDLVIRTGGEHRISNFLLWQIAYAELFFTDVLWPDFNDIVFRRALHSFMKRDRRFGKSAFI.

Asp-27 is an active-site residue. Asp-27 contacts Mg(2+). Substrate contacts are provided by residues 28–31 (GNGR), Trp-32, Arg-40, His-44, and 72–74 (SSE). Asn-75 acts as the Proton acceptor in catalysis. 3 residues coordinate substrate: Trp-76, Arg-78, and Arg-195. His-200 provides a ligand contact to Mg(2+). 201–203 (RIS) serves as a coordination point for substrate. Glu-214 is a binding site for Mg(2+).

The protein belongs to the UPP synthase family. Homodimer. Mg(2+) serves as cofactor.

It carries out the reaction 8 isopentenyl diphosphate + (2E,6E)-farnesyl diphosphate = di-trans,octa-cis-undecaprenyl diphosphate + 8 diphosphate. In terms of biological role, catalyzes the sequential condensation of isopentenyl diphosphate (IPP) with (2E,6E)-farnesyl diphosphate (E,E-FPP) to yield (2Z,6Z,10Z,14Z,18Z,22Z,26Z,30Z,34E,38E)-undecaprenyl diphosphate (di-trans,octa-cis-UPP). UPP is the precursor of glycosyl carrier lipid in the biosynthesis of bacterial cell wall polysaccharide components such as peptidoglycan and lipopolysaccharide. This chain is Ditrans,polycis-undecaprenyl-diphosphate synthase ((2E,6E)-farnesyl-diphosphate specific), found in Blochmanniella floridana.